We begin with the raw amino-acid sequence, 514 residues long: ATP synthase subunit alpha (514 aa).

170–177 (GDRQIGKT) lines the ATP pocket.

It belongs to the ATPase alpha/beta chains family. In terms of assembly, F-type ATPases have 2 components, CF(1) - the catalytic core - and CF(0) - the membrane proton channel. CF(1) has five subunits: alpha(3), beta(3), gamma(1), delta(1), epsilon(1). CF(0) has three main subunits: a(1), b(2) and c(9-12). The alpha and beta chains form an alternating ring which encloses part of the gamma chain. CF(1) is attached to CF(0) by a central stalk formed by the gamma and epsilon chains, while a peripheral stalk is formed by the delta and b chains.

The protein localises to the cell inner membrane. It carries out the reaction ATP + H2O + 4 H(+)(in) = ADP + phosphate + 5 H(+)(out). Produces ATP from ADP in the presence of a proton gradient across the membrane. The alpha chain is a regulatory subunit. This is ATP synthase subunit alpha from Pseudomonas fluorescens (strain ATCC BAA-477 / NRRL B-23932 / Pf-5).